The following is a 622-amino-acid chain: 1,4-alpha-glucan branching enzyme GlgB (622 aa).

Asp-300 serves as the catalytic Nucleophile. The active-site Proton donor is the Glu-351.

Belongs to the glycosyl hydrolase 13 family. GlgB subfamily. In terms of assembly, monomer.

It carries out the reaction Transfers a segment of a (1-&gt;4)-alpha-D-glucan chain to a primary hydroxy group in a similar glucan chain.. Its pathway is glycan biosynthesis; glycogen biosynthesis. Catalyzes the formation of the alpha-1,6-glucosidic linkages in glycogen by scission of a 1,4-alpha-linked oligosaccharide from growing alpha-1,4-glucan chains and the subsequent attachment of the oligosaccharide to the alpha-1,6 position. In Streptococcus agalactiae serotype V (strain ATCC BAA-611 / 2603 V/R), this protein is 1,4-alpha-glucan branching enzyme GlgB.